The primary structure comprises 291 residues: Bifunctional protein FolD (291 aa).

Residues 167–169 (GRS) and Ser-192 contribute to the NADP(+) site.

The protein belongs to the tetrahydrofolate dehydrogenase/cyclohydrolase family. In terms of assembly, homodimer.

It catalyses the reaction (6R)-5,10-methylene-5,6,7,8-tetrahydrofolate + NADP(+) = (6R)-5,10-methenyltetrahydrofolate + NADPH. The catalysed reaction is (6R)-5,10-methenyltetrahydrofolate + H2O = (6R)-10-formyltetrahydrofolate + H(+). It participates in one-carbon metabolism; tetrahydrofolate interconversion. Catalyzes the oxidation of 5,10-methylenetetrahydrofolate to 5,10-methenyltetrahydrofolate and then the hydrolysis of 5,10-methenyltetrahydrofolate to 10-formyltetrahydrofolate. This chain is Bifunctional protein FolD, found in Leptospira biflexa serovar Patoc (strain Patoc 1 / Ames).